We begin with the raw amino-acid sequence, 398 residues long: Cytohesin-1 (398 aa).

M1 bears the N-acetylmethionine mark. A coiled-coil region spans residues 10-67 (SDLTAEERQELENIRRRKQELLADIQRLKDEIAEVANEIENLGSTEERKNMQRNKQVA). The SEC7 domain maps to 73 to 202 (FNMDPKKGIQ…IIMLNTSLHN (130 aa)). The region spanning 260-377 (NPDREGWLLK…WIKCIKAAIS (118 aa)) is the PH domain. Residues 269 to 277 (KLGGGRVKT), R281, Y292, R302, and N351 contribute to the a 1,2-diacyl-sn-glycero-3-phospho-(1D-myo-inositol-3,4,5-trisphosphate) site. Positions 388–396 (RKKKVSSTK) are C-terminal autoinhibitory region.

Interacts with TRIM23 and CYTIP. Interacts (via coiled-coil domain) with FRMD4A (via coiled-coil domain). Interacts with FRMD4B. Found in a complex with PARD3, CYTH1 and FRMD4A. Interacts (via N-terminal domain) with INAVA (via N-terminal domain). In terms of processing, ubiquitinated by SCF(FBXW11) E3 ubiquitin-protein ligase complex. Ubiquitination induces proteasomal degradation.

Its subcellular location is the cell membrane. The protein localises to the cytoplasm. It is found in the cytosol. It localises to the cell junction. The protein resides in the tight junction. Its subcellular location is the adherens junction. Promotes guanine-nucleotide exchange on ARF1, ARF5 and ARF6. Promotes the activation of ARF factors through replacement of GDP with GTP. Plays an important role in membrane trafficking, during junctional remodeling and epithelial polarization, through regulation of ARF6 activity. The protein is Cytohesin-1 (CYTH1) of Chlorocebus aethiops (Green monkey).